Here is a 426-residue protein sequence, read N- to C-terminus: Kelch repeat-containing protein At3g27220 (426 aa).

A helical membrane pass occupies residues leucine 18 to cysteine 38. 5 Kelch repeats span residues leucine 123–aspartate 170, tyrosine 173–glycine 222, leucine 224–aspartate 275, lysine 276–valine 338, and serine 341–glycine 394.

The protein resides in the membrane. This Arabidopsis thaliana (Mouse-ear cress) protein is Kelch repeat-containing protein At3g27220.